Here is a 478-residue protein sequence, read N- to C-terminus: Cytochrome c-552 (478 aa).

An N-terminal signal peptide occupies residues 1-26 (MARKTLRARRFFSLIFPFFFITSVYA). H94 is a binding site for heme c. Residues C122, C125, and K126 each contribute to the heme site. Residues C160, C163, H164, C209, C212, and H213 each coordinate heme c. Ca(2+) is bound by residues E215, Y216, K261, and Q263. Position 216 (Y216) interacts with substrate. H264 is a binding site for substrate. Positions 275, 282, 285, 286, 301, 314, 317, 318, and 393 each coordinate heme c.

This sequence belongs to the cytochrome c-552 family. Requires Ca(2+) as cofactor. Heme c is required as a cofactor.

The protein resides in the periplasm. It catalyses the reaction 6 Fe(III)-[cytochrome c] + NH4(+) + 2 H2O = 6 Fe(II)-[cytochrome c] + nitrite + 8 H(+). The protein operates within nitrogen metabolism; nitrate reduction (assimilation). Functionally, catalyzes the reduction of nitrite to ammonia, consuming six electrons in the process. In Salmonella typhi, this protein is Cytochrome c-552.